The following is a 600-amino-acid chain: Aspartate--tRNA(Asp/Asn) ligase (600 aa).

Glu174 contacts L-aspartate. The aspartate stretch occupies residues 198 to 201; the sequence is QLFK. Arg220 serves as a coordination point for L-aspartate. ATP-binding positions include 220–222 and Gln229; that span reads RDE. L-aspartate is bound at residue His457. ATP is bound at residue Glu491. Residue Arg498 coordinates L-aspartate. Position 543-546 (543-546) interacts with ATP; sequence GLDR.

Belongs to the class-II aminoacyl-tRNA synthetase family. Type 1 subfamily. As to quaternary structure, homodimer.

It localises to the cytoplasm. It carries out the reaction tRNA(Asx) + L-aspartate + ATP = L-aspartyl-tRNA(Asx) + AMP + diphosphate. Aspartyl-tRNA synthetase with relaxed tRNA specificity since it is able to aspartylate not only its cognate tRNA(Asp) but also tRNA(Asn). Reaction proceeds in two steps: L-aspartate is first activated by ATP to form Asp-AMP and then transferred to the acceptor end of tRNA(Asp/Asn). This Burkholderia ambifaria (strain ATCC BAA-244 / DSM 16087 / CCUG 44356 / LMG 19182 / AMMD) (Burkholderia cepacia (strain AMMD)) protein is Aspartate--tRNA(Asp/Asn) ligase.